Consider the following 205-residue polypeptide: Inactive ribonuclease-like protein 9 (205 aa).

The first 24 residues, 1 to 24, serve as a signal peptide directing secretion; it reads MMLITTHSLPLLLLLLQLWQPLQF. 3 disulfide bridges follow: C97–C152, C115–C167, and C122–C129. N-linked (GlcNAc...) asparagine glycosylation is found at N130 and N142.

Belongs to the pancreatic ribonuclease family.

It is found in the secreted. Functionally, does not exhibit any ribonuclease activity. The sequence is that of Inactive ribonuclease-like protein 9 (RNASE9) from Cebus albifrons (White-fronted capuchin).